We begin with the raw amino-acid sequence, 115 residues long: Large ribosomal subunit protein uL18 (115 aa).

The interval methionine 1–glycine 24 is disordered. Residues leucine 10–glycine 20 show a composition bias toward basic residues.

The protein belongs to the universal ribosomal protein uL18 family. In terms of assembly, part of the 50S ribosomal subunit; part of the 5S rRNA/L5/L18/L25 subcomplex. Contacts the 5S and 23S rRNAs.

Functionally, this is one of the proteins that bind and probably mediate the attachment of the 5S RNA into the large ribosomal subunit, where it forms part of the central protuberance. This chain is Large ribosomal subunit protein uL18, found in Lactococcus lactis subsp. cremoris (strain MG1363).